The sequence spans 232 residues: Large ribosomal subunit protein uL1 (232 aa).

Belongs to the universal ribosomal protein uL1 family. In terms of assembly, part of the 50S ribosomal subunit.

Functionally, binds directly to 23S rRNA. The L1 stalk is quite mobile in the ribosome, and is involved in E site tRNA release. Its function is as follows. Protein L1 is also a translational repressor protein, it controls the translation of the L11 operon by binding to its mRNA. The chain is Large ribosomal subunit protein uL1 from Azorhizobium caulinodans (strain ATCC 43989 / DSM 5975 / JCM 20966 / LMG 6465 / NBRC 14845 / NCIMB 13405 / ORS 571).